Reading from the N-terminus, the 987-residue chain is UvrABC system protein A (987 aa).

33-40 (GLSGSGKS) is a binding site for ATP. The segment at 255–282 (CPVCDYSLPELEPRLFSFNAPVGACPSC) adopts a C4-type zinc-finger fold. 2 consecutive ABC transporter domains span residues 312–589 (WDRR…PRSL) and 609–938 (PNPK…QFLA). 642–649 (GVSGSGKS) lines the ATP pocket. Residues 741-767 (CEACQGDGMIKVEMHFLPDVYVPCDVC) form a C4-type zinc finger. The interval 948–987 (ETRPAAMANKPDARPPRKVKPEKVAKAAKSATKKTAKKAS) is disordered. Basic and acidic residues predominate over residues 958-972 (PDARPPRKVKPEKVA). Over residues 978 to 987 (ATKKTAKKAS) the composition is skewed to basic residues.

This sequence belongs to the ABC transporter superfamily. UvrA family. Forms a heterotetramer with UvrB during the search for lesions.

It localises to the cytoplasm. Its function is as follows. The UvrABC repair system catalyzes the recognition and processing of DNA lesions. UvrA is an ATPase and a DNA-binding protein. A damage recognition complex composed of 2 UvrA and 2 UvrB subunits scans DNA for abnormalities. When the presence of a lesion has been verified by UvrB, the UvrA molecules dissociate. In Xanthomonas axonopodis pv. citri (strain 306), this protein is UvrABC system protein A.